Here is a 189-residue protein sequence, read N- to C-terminus: Adenylate kinase (189 aa).

10–15 serves as a coordination point for ATP; it reads AAGKGT. The NMP stretch occupies residues 30 to 59; sequence STGDMLRAARASGSELGQRVAKIMDEGGLV. AMP is bound by residues T31, R36, 57 to 59, 85 to 88, and Q92; these read GLV and GFPR. Positions 126–136 are LID; the sequence is KRFEEQGRADD. Residue R127 coordinates ATP. The AMP site is built by R133 and R144. G172 serves as a coordination point for ATP.

It belongs to the adenylate kinase family. In terms of assembly, monomer.

It localises to the cytoplasm. The enzyme catalyses AMP + ATP = 2 ADP. It functions in the pathway purine metabolism; AMP biosynthesis via salvage pathway; AMP from ADP: step 1/1. Its function is as follows. Catalyzes the reversible transfer of the terminal phosphate group between ATP and AMP. Plays an important role in cellular energy homeostasis and in adenine nucleotide metabolism. The polypeptide is Adenylate kinase (Hyphomonas neptunium (strain ATCC 15444)).